The sequence spans 376 residues: 26S proteasome non-ATPase regulatory subunit 13 (376 aa).

The PCI domain maps to 171–338; sequence SYYKDALRFL…KRVHMTWVQP (168 aa). Lys-298 is modified (N6-acetyllysine).

The protein belongs to the proteasome subunit S11 family. Component of the 19S proteasome regulatory particle complex. The 26S proteasome consists of a 20S core particle (CP) and two 19S regulatory subunits (RP). The regulatory particle is made of a lid composed of 9 subunits including PSMD13, a base containing 6 ATPases and few additional components.

Its function is as follows. Component of the 26S proteasome, a multiprotein complex involved in the ATP-dependent degradation of ubiquitinated proteins. This complex plays a key role in the maintenance of protein homeostasis by removing misfolded or damaged proteins, which could impair cellular functions, and by removing proteins whose functions are no longer required. Therefore, the proteasome participates in numerous cellular processes, including cell cycle progression, apoptosis, or DNA damage repair. This Homo sapiens (Human) protein is 26S proteasome non-ATPase regulatory subunit 13 (PSMD13).